A 2002-amino-acid polypeptide reads, in one-letter code: Methylcytosine dioxygenase TET2 (2002 aa).

The segment covering 1 to 11 (MEQDRTNHVEG) has biased composition (basic and acidic residues). The disordered stretch occupies residues 1 to 22 (MEQDRTNHVEGNRLSPFLIPSP). S15, S75, and S99 each carry phosphoserine. Residues 113–124 (KQDQKANGERRN) show a composition bias toward basic and acidic residues. Disordered stretches follow at residues 113 to 154 (KQDQ…VSSV), 266 to 287 (HPSH…LPPK), 349 to 368 (GEEF…GSSE), 390 to 488 (DSFS…VNRN), 703 to 748 (LNQQ…QQKL), 930 to 949 (VPDQ…TQKH), and 1075 to 1095 (DSHT…PTKR). 2 stretches are compositionally biased toward polar residues: residues 126–143 (GVSQ…NVSD) and 267–283 (PSHT…SNSE). The span at 397–416 (TPPPPSQLLLSPPPPLPQVP) shows a compositional bias: pro residues. Composition is skewed to polar residues over residues 479–488 (RPQNNCVNRN) and 703–718 (LNQQ…NSHL). Positions 731 to 748 (QPSQSSHLPQNQQQQQKL) are enriched in low complexity. Polar residues-rich tracts occupy residues 935–944 (GSHTQTPPQK) and 1081–1095 (LEQQ…PTKR). A phosphoserine mark is found at S1107 and S1109. C1133, C1135, C1193, H1219, and C1221 together coordinate Zn(2+). R1261 serves as a coordination point for 2-oxoglutarate. Positions 1271, 1273, 1289, and 1298 each coordinate Zn(2+). Positions 1290–1303 (SWSMYYNGCKFARS) are interaction with DNA. K1299 is covalently cross-linked (Glycyl lysine isopeptide (Lys-Gly) (interchain with G-Cter in ubiquitin)). Residue C1358 participates in Zn(2+) binding. C1374 is a 2-oxoglutarate binding site. H1380 is a binding site for Zn(2+). Positions 1382 and 1384 each coordinate Fe cation. N1387 contacts substrate. H1416 contributes to the 2-oxoglutarate binding site. Disordered stretches follow at residues 1475 to 1507 (AAEK…NASQ) and 1521 to 1587 (VMQQ…HTSD). The span at 1477–1487 (EKLSSLENSSN) shows a compositional bias: low complexity. A compositionally biased stretch (polar residues) spans 1496 to 1507 (PSRTKQTENASQ). 2 stretches are compositionally biased toward low complexity: residues 1523–1532 (QQSQQPQPLQ) and 1539–1551 (QQQQ…QPHH). The segment covering 1554–1568 (TESVNSYSASGSTNP) has biased composition (polar residues). Residue R1682 is modified to Asymmetric dimethylarginine. Fe cation is bound at residue H1881. A 2-oxoglutarate-binding site is contributed by 1896-1898 (RIS). 1902 to 1904 (YQH) contacts substrate. H1912 contacts Zn(2+). Residues 1932–1961 (CEKYGPDYVPQKSHGKKVKREPAEPHETSE) form a disordered region. A compositionally biased stretch (basic and acidic residues) spans 1951 to 1960 (REPAEPHETS).

It belongs to the TET family. As to quaternary structure, interacts with HCFC1. Interacts with OGT. Interacts with PROSER1; this interaction mediates TET2 O-GlcNAcylation and stability by promoting the interaction between OGT and TET2. Directly interacts (via C-terminus) with the DCAF1 component of the CRL4(VprBP) E3 ubiquitin-protein ligase complex. Fe(2+) serves as cofactor. Requires Zn(2+) as cofactor. May be glycosylated. It is unclear whether interaction with OGT leads to GlcNAcylation. According to a report, it is not GlcNAcylated by OGT. In contrast, another group reports GlcNAcylation by OGT in mouse ortholog. In terms of processing, monoubiquitinated at Lys-1299 by the DCX (DDB1-CUL4-X-box) E3 ubiquitin-protein ligase complex called CRL4(VprBP) or CUL4A-RBX1-DDB1-DCAF1/VPRBP complex; this modification promotes binding to DNA. Post-translationally, acetylated. Deacetylase HDAC6 acts as a valine sensor by binding to valine through its primate-specific SE14 repeat region and deacetylates TET2 following valine deprivation which promotes TET2-dependent DNA demethylation. As to expression, broadly expressed. Highly expressed in hematopoietic cells; highest expression observed in granulocytes. Expression is reduced in granulocytes from peripheral blood of patients affected by myelodysplastic syndromes.

The protein localises to the nucleus. It is found in the chromosome. It carries out the reaction a 5-methyl-2'-deoxycytidine in DNA + 2-oxoglutarate + O2 = a 5-hydroxymethyl-2'-deoxycytidine in DNA + succinate + CO2. The enzyme catalyses a 5-hydroxymethyl-2'-deoxycytidine in DNA + 2-oxoglutarate + O2 = a 5-formyl-2'-deoxycytidine in DNA + succinate + CO2 + H2O. It catalyses the reaction a 5-formyl-2'-deoxycytidine in DNA + 2-oxoglutarate + O2 = a 5-carboxyl-2'-deoxycytidine in DNA + succinate + CO2 + H(+). Dioxygenase that catalyzes the conversion of the modified genomic base 5-methylcytosine (5mC) into 5-hydroxymethylcytosine (5hmC) and plays a key role in active DNA demethylation. Has a preference for 5-hydroxymethylcytosine in CpG motifs. Also mediates subsequent conversion of 5hmC into 5-formylcytosine (5fC), and conversion of 5fC to 5-carboxylcytosine (5caC). Conversion of 5mC into 5hmC, 5fC and 5caC probably constitutes the first step in cytosine demethylation. Methylation at the C5 position of cytosine bases is an epigenetic modification of the mammalian genome which plays an important role in transcriptional regulation. In addition to its role in DNA demethylation, also involved in the recruitment of the O-GlcNAc transferase OGT to CpG-rich transcription start sites of active genes, thereby promoting histone H2B GlcNAcylation by OGT. The sequence is that of Methylcytosine dioxygenase TET2 (TET2) from Homo sapiens (Human).